Consider the following 129-residue polypeptide: KIYTRCELAAAMKRYGLDNYQGYSLGNWVCAARYESNYNTQATNRNSDGSTDYGILQINSRWWCNDGKTPGTRNLCHISCSALMGADIAPSVRCAKKIVSDGNGMNAWVAWRKHCKGTDVSKWIKDCKL.

The C-type lysozyme domain maps to 1 to 129 (KIYTRCELAA…VSKWIKDCKL (129 aa)). Disulfide bonds link cysteine 6–cysteine 127, cysteine 30–cysteine 115, cysteine 64–cysteine 80, and cysteine 76–cysteine 94. Residues glutamate 35 and aspartate 52 contribute to the active site.

The protein belongs to the glycosyl hydrolase 22 family. As to quaternary structure, monomer.

Its subcellular location is the secreted. It catalyses the reaction Hydrolysis of (1-&gt;4)-beta-linkages between N-acetylmuramic acid and N-acetyl-D-glucosamine residues in a peptidoglycan and between N-acetyl-D-glucosamine residues in chitodextrins.. Functionally, lysozymes have primarily a bacteriolytic function; those in tissues and body fluids are associated with the monocyte-macrophage system and enhance the activity of immunoagents. The sequence is that of Lysozyme C (LYZ) from Crax fasciolata (Bare-faced curassow).